A 133-amino-acid polypeptide reads, in one-letter code: Hydrogenase maturation factor HypA (133 aa).

Residue histidine 2 participates in Ni(2+) binding. Zn(2+)-binding residues include cysteine 73, cysteine 75, cysteine 105, and cysteine 108.

It belongs to the HypA/HybF family.

Involved in the maturation of [NiFe] hydrogenases. Required for nickel insertion into the metal center of the hydrogenase. This chain is Hydrogenase maturation factor HypA, found in Methanosarcina acetivorans (strain ATCC 35395 / DSM 2834 / JCM 12185 / C2A).